The following is a 354-amino-acid chain: Histidinol-phosphate aminotransferase (354 aa).

K210 is modified (N6-(pyridoxal phosphate)lysine).

This sequence belongs to the class-II pyridoxal-phosphate-dependent aminotransferase family. Histidinol-phosphate aminotransferase subfamily. Homodimer. The cofactor is pyridoxal 5'-phosphate.

The catalysed reaction is L-histidinol phosphate + 2-oxoglutarate = 3-(imidazol-4-yl)-2-oxopropyl phosphate + L-glutamate. It functions in the pathway amino-acid biosynthesis; L-histidine biosynthesis; L-histidine from 5-phospho-alpha-D-ribose 1-diphosphate: step 7/9. This is Histidinol-phosphate aminotransferase from Clostridium botulinum (strain Okra / Type B1).